Consider the following 964-residue polypeptide: Isoleucine--tRNA ligase (964 aa).

Residues 66 to 76 carry the 'HIGH' region motif; that stretch reads PYANGDIHIGH. Glu596 serves as a coordination point for L-isoleucyl-5'-AMP. The 'KMSKS' region signature appears at 637 to 641; the sequence is KMSKS. Residue Lys640 participates in ATP binding. Zn(2+) contacts are provided by Cys927, Cys930, Cys947, and Cys950.

The protein belongs to the class-I aminoacyl-tRNA synthetase family. IleS type 1 subfamily. Monomer. It depends on Zn(2+) as a cofactor.

The protein localises to the cytoplasm. It catalyses the reaction tRNA(Ile) + L-isoleucine + ATP = L-isoleucyl-tRNA(Ile) + AMP + diphosphate. In terms of biological role, catalyzes the attachment of isoleucine to tRNA(Ile). As IleRS can inadvertently accommodate and process structurally similar amino acids such as valine, to avoid such errors it has two additional distinct tRNA(Ile)-dependent editing activities. One activity is designated as 'pretransfer' editing and involves the hydrolysis of activated Val-AMP. The other activity is designated 'posttransfer' editing and involves deacylation of mischarged Val-tRNA(Ile). The protein is Isoleucine--tRNA ligase of Cupriavidus necator (strain ATCC 17699 / DSM 428 / KCTC 22496 / NCIMB 10442 / H16 / Stanier 337) (Ralstonia eutropha).